Consider the following 322-residue polypeptide: MRYSKIVSLGAYRGERDVYNDELIGPINSSDEWIRRRTGIISRKRALSGTTVVDMAYAASKEALNDAQMRPEDIDLILVATITHFGHTPSVAAHVGFRIGVQDAILLDINAACAGFSYAIFQADLMIKSGVASRALVIGVDKLSEFIDPLDRTISFLLADGAGAAILVGSTSMGIGKTVCGGNPGQLESVGLTGSTTDVKSGSAWPTLRQEGSSIFRWAVWQMAKVAKQILDINQVQPGDLNAFIPHQANIRIIDELAKQIGLEENVLIAQDICKTGNTSSASIPLAMHSLIKGNPSLSGELALQIGFGAGLVYAGQTVVMP.

Residues Cys-113 and His-247 contribute to the active site. An ACP-binding region spans residues Gln-248 to Arg-252. Residue Asn-278 is part of the active site.

This sequence belongs to the thiolase-like superfamily. FabH family. Homodimer.

The protein localises to the cytoplasm. The enzyme catalyses malonyl-[ACP] + acetyl-CoA + H(+) = 3-oxobutanoyl-[ACP] + CO2 + CoA. It participates in lipid metabolism; fatty acid biosynthesis. Functionally, catalyzes the condensation reaction of fatty acid synthesis by the addition to an acyl acceptor of two carbons from malonyl-ACP. Catalyzes the first condensation reaction which initiates fatty acid synthesis and may therefore play a role in governing the total rate of fatty acid production. Possesses both acetoacetyl-ACP synthase and acetyl transacylase activities. Its substrate specificity determines the biosynthesis of branched-chain and/or straight-chain of fatty acids. The sequence is that of Beta-ketoacyl-[acyl-carrier-protein] synthase III from Tropheryma whipplei (strain TW08/27) (Whipple's bacillus).